The primary structure comprises 773 residues: Carnitine O-palmitoyltransferase 1, liver isoform (773 aa).

Ala-2 bears the N-acetylalanine mark. Residues 2 to 47 (AEAHQAVAFQFTVTPDGIDLRLSHEALKQICLSGLHSWKKKFIRFK) are Cytoplasmic-facing. The helical transmembrane segment at 48–73 (NGIITGVFPANPSSWLIVVVGVISSM) threads the bilayer. The Mitochondrial intermembrane portion of the chain corresponds to 74–102 (HAKVDPSLGMIAKISRTLDTTGRMSSQTK). Residues 103-122 (NIVSGVLFGTGLWVAVIMTM) form a helical membrane-spanning segment. Topologically, residues 123–773 (RYSLKVLLSY…LFGLTINSKK (651 aa)) are cytoplasmic. Tyr-282 is modified (3'-nitrotyrosine). His-473 acts as the Proton acceptor in catalysis. CoA is bound at residue 555-567 (GKGLIKKCRTSPD). Position 588 is a phosphothreonine (Thr-588). Tyr-589 carries the post-translational modification 3'-nitrotyrosine. (R)-carnitine contacts are provided by Tyr-589 and Thr-602. Position 604 is a phosphothreonine (Thr-604). Phosphoserine occurs at positions 741 and 747.

This sequence belongs to the carnitine/choline acetyltransferase family. As to quaternary structure, homohexamer and homotrimer. Identified in a complex that contains at least CPT1A, ACSL1 and VDAC1. Also identified in complexes with ACSL1 and VDAC2 and VDAC3. Interacts with ZDHHC4. In terms of tissue distribution, liver and kidney.

The protein localises to the mitochondrion outer membrane. It catalyses the reaction (R)-carnitine + hexadecanoyl-CoA = O-hexadecanoyl-(R)-carnitine + CoA. The catalysed reaction is succinyl-CoA + L-lysyl-[protein] = N(6)-succinyl-L-lysyl-[protein] + CoA + H(+). It participates in lipid metabolism; fatty acid beta-oxidation. Inhibited by malonyl-CoA. Its function is as follows. Catalyzes the transfer of the acyl group of long-chain fatty acid-CoA conjugates onto carnitine, an essential step for the mitochondrial uptake of long-chain fatty acids and their subsequent beta-oxidation in the mitochondrion. Also possesses a lysine succinyltransferase activity that can regulate enzymatic activity of substrate proteins such as ENO1 and metabolism independent of its classical carnitine O-palmitoyltransferase activity. Plays an important role in hepatic triglyceride metabolism. Also plays a role in inducible regulatory T-cell (iTreg) differentiation once activated by butyryl-CoA that antagonizes malonyl-CoA-mediated CPT1A repression. Sustains the IFN-I response by recruiting ZDHCC4 to palmitoylate MAVS at the mitochondria leading to MAVS stabilization and activation. The polypeptide is Carnitine O-palmitoyltransferase 1, liver isoform (Cpt1a) (Rattus norvegicus (Rat)).